We begin with the raw amino-acid sequence, 321 residues long: Nitrilase blr3397 (321 aa).

The CN hydrolase domain occupies 10-277 (YKAAVVQAAS…ETILYADIAL (268 aa)). The Proton acceptor role is filled by E50. The active-site Proton donor is K137. C171 serves as the catalytic Nucleophile.

Belongs to the carbon-nitrogen hydrolase superfamily. Nitrilase family. In terms of assembly, homodecamer.

It carries out the reaction an aliphatic nitrile + 2 H2O = a carboxylate + NH4(+). Functionally, nitrilase that acts on various kinds of nitrile compounds such as aliphatic and aromatic nitriles. Has higher activity toward aliphatic nitriles compared to aromatic nitriles. Among the different substrates tested, has the highest activity toward hydrocinnamonitrile. This chain is Nitrilase blr3397, found in Bradyrhizobium diazoefficiens (strain JCM 10833 / BCRC 13528 / IAM 13628 / NBRC 14792 / USDA 110).